Reading from the N-terminus, the 648-residue chain is Probable ATP-dependent RNA helicase DDX43 (648 aa).

The disordered stretch occupies residues 1–60 (MSHHGGAPKASTWVVASRRSSTVSRAPERRPAEELNRTGPEGYSVGRGGRWRGTSRPPEA). The segment covering 10–25 (ASTWVVASRRSSTVSR) has biased composition (low complexity). A compositionally biased stretch (basic and acidic residues) spans 26–36 (APERRPAEELN). One can recognise a KH domain in the interval 67-128 (ELPLCFALKS…AMQTKAKAVI (62 aa)). The Q motif signature appears at 242–270 (TFDDAFQCYPEVMENIKKAGFQKPTPIQS). Residues 273-448 (WPIVLQGIDL…QSYLKEPMIV (176 aa)) enclose the Helicase ATP-binding domain. 286-293 (AQTGTGKT) is an ATP binding site. The short motif at 396–399 (DEAD) is the DEAD box element. Positions 460 to 621 (SVKQNIIVTT…SIPEELVSMA (162 aa)) constitute a Helicase C-terminal domain. A compositionally biased stretch (basic and acidic residues) spans 628–641 (QQKREMERKMERPQ). Positions 628–648 (QQKREMERKMERPQGRPKKFH) are disordered.

The protein belongs to the DEAD box helicase family. In terms of tissue distribution, expressed in testis. Expressed in many tumors of various histological types at a level that is 100-fold higher than the level observed in normal tissues except testis.

It carries out the reaction ATP + H2O = ADP + phosphate + H(+). In Homo sapiens (Human), this protein is Probable ATP-dependent RNA helicase DDX43 (DDX43).